The sequence spans 158 residues: Protein-export protein SecB (158 aa).

Belongs to the SecB family. Homotetramer, a dimer of dimers. One homotetramer interacts with 1 SecA dimer.

The protein resides in the cytoplasm. Its function is as follows. One of the proteins required for the normal export of preproteins out of the cell cytoplasm. It is a molecular chaperone that binds to a subset of precursor proteins, maintaining them in a translocation-competent state. It also specifically binds to its receptor SecA. The polypeptide is Protein-export protein SecB (Bartonella quintana (strain Toulouse) (Rochalimaea quintana)).